We begin with the raw amino-acid sequence, 119 residues long: MEIHSNIILLLLIALFAIFVKMEDEEKPPNLTRMPEGVNFACSGKKPGFYADEGFDCQVYHMCSPEGQLTTYLCGPGTIFNQKKLVCDLPTNYNCADAAKDAEEANANVFKTQSSTSEP.

The first 22 residues, 1–22 (MEIHSNIILLLLIALFAIFVKM), serve as a signal peptide directing secretion. One can recognise a Chitin-binding type-2 domain in the interval 39–97 (NFACSGKKPGFYADEGFDCQVYHMCSPEGQLTTYLCGPGTIFNQKKLVCDLPTNYNCAD). A disulfide bond links cysteine 74 and cysteine 87.

Belongs to the scoloptoxin-01 family. Contains 3 disulfide bonds. Expressed by the venom gland.

The protein localises to the secreted. The protein is U-scoloptoxin(01)-Er1a of Ethmostigmus rubripes (Giant centipede).